The sequence spans 481 residues: Glutamyl-tRNA(Gln) amidotransferase subunit A (481 aa).

Catalysis depends on charge relay system residues Lys-76 and Ser-151. The active-site Acyl-ester intermediate is Ser-175.

This sequence belongs to the amidase family. GatA subfamily. Heterotrimer of A, B and C subunits.

It carries out the reaction L-glutamyl-tRNA(Gln) + L-glutamine + ATP + H2O = L-glutaminyl-tRNA(Gln) + L-glutamate + ADP + phosphate + H(+). Its function is as follows. Allows the formation of correctly charged Gln-tRNA(Gln) through the transamidation of misacylated Glu-tRNA(Gln) in organisms which lack glutaminyl-tRNA synthetase. The reaction takes place in the presence of glutamine and ATP through an activated gamma-phospho-Glu-tRNA(Gln). The chain is Glutamyl-tRNA(Gln) amidotransferase subunit A from Neisseria meningitidis serogroup A / serotype 4A (strain DSM 15465 / Z2491).